The chain runs to 164 residues: Diphosphoinositol polyphosphate phosphohydrolase 3-alpha (164 aa).

Substrate-binding positions include Arg-9, 17–19 (KKR), and 38–40 (SSR). The region spanning 17-144 (KKRAACLCFR…VHAEYLEKLK (128 aa)) is the Nudix hydrolase domain. Residues Gly-49 and Glu-65 each coordinate Mg(2+). Residues 50-71 (GGMEPEEEPGGAAVREVYEEAG) carry the Nudix box motif. Glu-68 functions as the Proton acceptor in the catalytic mechanism. Mg(2+) is bound at residue Glu-69. Substrate contacts are provided by residues 89–91 (PKH), Arg-115, and Lys-133. Residues 144–164 (KLGGSPTNGNSMAPSSPDSDP) are disordered. The segment covering 148-164 (SPTNGNSMAPSSPDSDP) has biased composition (polar residues).

This sequence belongs to the Nudix hydrolase family. DIPP subfamily. It depends on Mg(2+) as a cofactor. Mn(2+) is required as a cofactor. Mainly expressed in testis and, at lower level in brain. According to PubMed:12121577, it is widely expressed.

The protein localises to the cytoplasm. It carries out the reaction diphospho-myo-inositol polyphosphate + H2O = myo-inositol polyphosphate + phosphate.. It catalyses the reaction P(1),P(6)-bis(5'-adenosyl) hexaphosphate + H2O = adenosine 5'-pentaphosphate + AMP + 2 H(+). The enzyme catalyses P(1),P(5)-bis(5'-adenosyl) pentaphosphate + H2O = adenosine 5'-tetraphosphate + AMP + 2 H(+). Cleaves a beta-phosphate from the diphosphate groups in PP-InsP5 (diphosphoinositol pentakisphosphate), suggesting that it may play a role in signal transduction. Also able to catalyze the hydrolysis of dinucleoside oligophosphates, with Ap6A and Ap5A being the preferred substrates. The major reaction products are ADP and p4a from Ap6A and ADP and ATP from Ap5A. Also able to hydrolyze 5-phosphoribose 1-diphosphate. The protein is Diphosphoinositol polyphosphate phosphohydrolase 3-alpha (NUDT10) of Homo sapiens (Human).